The following is a 989-amino-acid chain: Autotransporter adhesin/invasin TibA (989 aa).

Residues 1 to 54 (MNKVYNTVWNESTGTWVVTSELTRKGGLRPRQIKRTVLAGLIAGLLMPSMPALA) form the signal peptide. O-alpha-linked (D-glycero-D-manno-heptose) serine glycosylation is found at Ser74, Ser86, Ser93, Ser94, Ser97, Ser100, Ser112, Ser113, Ser116, Ser119, Ser124, Ser131, Ser132, and Ser135. 12 consecutive repeat copies span residues 82–100 (TTIN…SATS), 101–119 (TTIN…SATS), 120–138 (STIN…SATN), 139–157 (TTVN…SAMG), 158–176 (TIIN…SATS), 177–195 (ASVT…IVKA), 196–214 (TSVN…SATD), 215–233 (TVLN…SAAK), 234–251 (TTIN…SATG), 252–270 (TSIY…SATN), 271–289 (TTVY…NVTE), and 290–308 (TTIT…SASK). A 12 X 19 AA approximate repeats region spans residues 82 to 308 (TTINSGGKQY…QVEAGGSASK (227 aa)). Residues 110–123 (HVSSGGSATSSTIN) show a composition bias toward polar residues. The interval 110 to 146 (HVSSGGSATSSTINSGGHQHVSSGGSATNTTVNNGGR) is disordered. Residues 124–135 (SGGHQHVSSGGS) show a composition bias toward low complexity. Residues 136-146 (ATNTTVNNGGR) show a composition bias toward polar residues. O-alpha-linked (D-glycero-D-manno-heptose) serine glycans are attached at residues Ser151, Ser154, Ser162, Ser170, Ser176, Ser181, Ser188, Ser189, Ser200, Ser226, Ser227, Ser230, Ser238, Ser248, Ser263, Ser264, Ser275, Ser294, Ser305, Ser313, and Ser322. The tract at residues 623 to 686 (WYLKADTPPP…GTSSSPVRRT (64 aa)) is disordered. Pro residues predominate over residues 629 to 638 (TPPPVTPPTN). Repeat copies occupy residues 639–643 (PDADN), 644–648 (PDAGN), 649–653 (PDAGN), 654–658 (PDAGN), 659–663 (PDAGN), 664–668 (PDAGK), 669–673 (PGTGK), and 674–678 (PDAGT). Residues 639–667 (PDADNPDAGNPDAGNPDAGNPDAGNPDAG) show a composition bias toward low complexity. Residues 639 to 678 (PDADNPDAGNPDAGNPDAGNPDAGNPDAGKPGTGKPDAGT) form an 8 X 5 AA repeats of P-[DG]-[AGT]-[DGA]-[NKT] region. One can recognise an Autotransporter domain in the interval 721-989 (NTRAPGGVWG…TGGVGFRINF (269 aa)).

As to quaternary structure, homohexamer. In terms of processing, glycosylated by TibC. Glycosylation is required for adhesion to and invasion of host cells. Glycosylation is dispensable for bacterial autoaggregation and biofilm formation.

The protein localises to the cell outer membrane. Functionally, mediates both adhesion to and invasion of human intestine epithelial cells. Also mediates bacterial cell aggregation via intercellular TibA-TibA interaction. Enhances biofilm formation. The sequence is that of Autotransporter adhesin/invasin TibA from Escherichia coli O78:H11 (strain H10407 / ETEC).